Here is a 572-residue protein sequence, read N- to C-terminus: Probable D-xylulose kinase A (572 aa).

Substrate contacts are provided by His95, Arg166, Asp282, and Asn283. Residues Trp365, 470 to 471, and Asn474 contribute to the ATP site; that span reads GG.

This sequence belongs to the FGGY kinase family.

It is found in the cytoplasm. It carries out the reaction D-xylulose + ATP = D-xylulose 5-phosphate + ADP + H(+). Functionally, highly specific D-xylulose kinase which participates in the catabolism of xylose. Xylose is a major component of hemicelluloses such as xylan. Most fungi utilize D-xylose via three enzymatic reactions, xylose reductase (XR), xylitol dehydrogenase (XDH), and xylulokinase, to form xylulose 5-phosphate, which enters pentose phosphate pathway. The chain is Probable D-xylulose kinase A (xkiA) from Aspergillus oryzae (strain ATCC 42149 / RIB 40) (Yellow koji mold).